The sequence spans 529 residues: Cytochrome P450 monooxygenase ausG (529 aa).

A helical transmembrane segment spans residues 31–51 (FLVTCGLPWLLLLFSVTIILF). Position 470 (cysteine 470) interacts with heme.

It belongs to the cytochrome P450 family. The cofactor is heme.

It is found in the membrane. The protein operates within secondary metabolite biosynthesis; terpenoid biosynthesis. In terms of biological role, cytochrome P450 monooxygenase; part of the gene cluster B that mediates the biosynthesis of austinol and dehydroaustinol, two fungal meroterpenoids. The first step of the pathway is the synthesis of 3,5-dimethylorsellinic acid by the polyketide synthase ausA. 3,5-dimethylorsellinic acid is then prenylated by the polyprenyl transferase ausN. Further epoxidation by the FAD-dependent monooxygenase ausM and cyclization by the probable terpene cyclase ausL lead to the formation of protoaustinoid A. Protoaustinoid A is then oxidized to spiro-lactone preaustinoid A3 by the combined action of the FAD-binding monooxygenases ausB and ausC, and the dioxygenase ausE. Acid-catalyzed keto-rearrangement and ring contraction of the tetraketide portion of preaustinoid A3 by ausJ lead to the formation of preaustinoid A4. The aldo-keto reductase ausK, with the help of ausH, is involved in the next step by transforming preaustinoid A4 into isoaustinone which is in turn hydroxylated by the P450 monooxygenase ausI to form austinolide. Finally, the cytochrome P450 monooxygenase ausG modifies austinolide to austinol. Austinol can be further modified to dehydroaustinol which forms a diffusible complex with diorcinol that initiates conidiation. Due to genetic rearrangements of the clusters and the subsequent loss of some enzymes, the end products of the Emericella nidulans austinoid biosynthesis clusters are austinol and dehydroaustinol, even if additional enzymes, such as the O-acetyltransferase ausQ and the cytochrome P450 monooxygenase ausR are still functional. This is Cytochrome P450 monooxygenase ausG from Emericella nidulans (strain FGSC A4 / ATCC 38163 / CBS 112.46 / NRRL 194 / M139) (Aspergillus nidulans).